A 477-amino-acid chain; its full sequence is ETS translocation variant 1 (477 aa).

Serine 94 bears the Phosphoserine mark. The disordered stretch occupies residues 128-178 (PQVGMRPSNPPTPSSTPVSPLHHASPNSAHTSKPDRAFPAHLPPSQPIQDS). Phosphoserine; by RPS6KA1 and RPS6KA5 occurs at positions 191 and 216. Residue lysine 317 forms a Glycyl lysine isopeptide (Lys-Gly) (interchain with G-Cter in SUMO2) linkage. The segment at residues 335–415 (LQLWQFLVAL…AGERYVYKFV (81 aa)) is a DNA-binding region (ETS).

The protein belongs to the ETS family. In terms of processing, sumoylated. Phosphorylated at Ser-191 and Ser-216 by RPS6KA1 and RPS6KA5; phosphorylation activates transcriptional activity.

It localises to the nucleus. Its function is as follows. Transcriptional activator that binds to DNA sequences containing the consensus pentanucleotide 5'-CGGA[AT]-3'. Required for olfactory dopaminergic neuron differentiation; may directly activate expression of tyrosine hydroxylase (TH). The sequence is that of ETS translocation variant 1 (ETV1) from Bos taurus (Bovine).